The primary structure comprises 205 residues: uncharacterized protein (205 aa).

One can recognise a GST N-terminal domain in the interval 1–82 (MIKVYGVPGW…MVLDRRPDLA (82 aa)). Residues V53 and 66 to 67 (ET) contribute to the glutathione site. Residues 86–205 (GRAERQLFQR…QEVLKRNEII (120 aa)) form the GST C-terminal domain.

The protein belongs to the GST superfamily. Beta family.

This is an uncharacterized protein from Escherichia coli (strain K12).